Here is a 360-residue protein sequence, read N- to C-terminus: Glutamate 5-kinase (360 aa).

Residue lysine 7 participates in ATP binding. Substrate contacts are provided by serine 47, aspartate 134, and asparagine 146. Residues 166–167 and 210–216 contribute to the ATP site; these read TD and TGGISTK. A PUA domain is found at 275 to 356; that stretch reads VGKITLDDGA…SSIIVVHRDV (82 aa).

It belongs to the glutamate 5-kinase family.

The protein localises to the cytoplasm. The catalysed reaction is L-glutamate + ATP = L-glutamyl 5-phosphate + ADP. Its pathway is amino-acid biosynthesis; L-proline biosynthesis; L-glutamate 5-semialdehyde from L-glutamate: step 1/2. In terms of biological role, catalyzes the transfer of a phosphate group to glutamate to form L-glutamate 5-phosphate. In Prochlorococcus marinus (strain MIT 9301), this protein is Glutamate 5-kinase.